The primary structure comprises 617 residues: MDLKTAVFNAARDGKLRLLTKLLASKSKAEVSSLISEKTNGATPLLMAARYGHLDMVEFLLEQCSASIEVGGSVNFDGETIEGAPPLWAASAAGHLKVVQSLLNHGASVNNTTLTNSTPLRAACFDGHLEIVKYLVEHKADLEVSNRHGHTCLMISCYKGHKEIAQYLLEKGADVNRKSVKGNTALHDCAESGSLDIMKMLLMYCAKMEKDGYGMTPLLSASVTGHTNIVDFLTHHAQTSKTERINALELLGATFVDKKRDLLGALKYWKKAMNMRYSDRTNIISKPVPQTLIMAYDYAKEVNSAEELEGLIADPDEMRMQALLIRERILGPSHPDTSYYIRYRGAVYADSGNFKRCINLWKYALDMQQSNLDPLSPMTASSLLSFAELFSFMLQDRAKGLLGTTVTFDDLMGILCKSVLEIERAIKQTQCPADPLQLNKALSIILHLICLLEKVPCTVEQDHFKKQTIYRFLKLHPRGKNNFSPLHLAVDKNTTCVGRYPVCKFPSLQVTAILIECGADVNVRDSDDNSPLHIAALNNHPDIMNLLIKSGAHFDATNLHKQTASDLLDEKEIAKNLIQPINHTTLQCLAARVIVNHRIYYKGNIPEKLETFVSLHR.

Methionine 1 carries the N-acetylmethionine modification. ANK repeat units lie at residues 2–31 (DLKT…KAEV), 40–70 (NGAT…SIEV), 82–111 (EGAP…SVNN), 115–144 (TNST…DLEV), 148–177 (HGHT…DVNR), 181–210 (KGNT…KMEK), and 213–242 (YGMT…TSKT). TPR repeat units follow at residues 245–279 (INAL…RYSD) and 338–371 (SYYI…QQSN). ANK repeat units lie at residues 481–523 (NNFS…DVNV) and 527–556 (DDNS…HFDA).

Belongs to the fem-1 family. As to quaternary structure, component of a Cul2-RING (CRL2) E3 ubiquitin-protein ligase complex, also named ECS (Elongin BC-CUL2/5-SOCS-box protein) complex, composed of CUL2, Elongin BC (ELOB and ELOC), RBX1 and substrate-specific adapter FEM1C. As to expression, widely expressed. Expressed at higher level in testis.

It functions in the pathway protein modification; protein ubiquitination. Functionally, substrate-recognition component of a Cul2-RING (CRL2) E3 ubiquitin-protein ligase complex of the DesCEND (destruction via C-end degrons) pathway, which recognizes a C-degron located at the extreme C terminus of target proteins, leading to their ubiquitination and degradation. The C-degron recognized by the DesCEND pathway is usually a motif of less than ten residues and can be present in full-length proteins, truncated proteins or proteolytically cleaved forms. The CRL2(FEM1C) complex specifically recognizes proteins with an arginine at the C-terminus: recognizes and binds proteins ending with -Lys/Arg-Xaa-Arg and -Lys/Arg-Xaa-Xaa-Arg C-degrons, such as SIL1 or OR51B2, leading to their ubiquitination and degradation. The CRL2(FEM1C) complex mediates ubiquitination and degradation of truncated MSRB1/SEPX1 selenoproteins produced by failed UGA/Sec decoding. Promotes ubiquitination and degradation of SLBP. This Mus musculus (Mouse) protein is Protein fem-1 homolog C.